Reading from the N-terminus, the 745-residue chain is Phosphoribosylformylglycinamidine synthase subunit PurL (745 aa).

Residue His47 is part of the active site. Tyr50 and Lys90 together coordinate ATP. Glu92 is a Mg(2+) binding site. Substrate is bound by residues Ser93–His96 and Arg115. The active-site Proton acceptor is His94. Mg(2+) is bound at residue Asp116. Substrate is bound at residue Gln240. Position 268 (Asp268) interacts with Mg(2+). Glu312–Gln314 serves as a coordination point for substrate. 2 residues coordinate ATP: Asn501 and Gly538. Asn539 contacts Mg(2+). Ser541 contacts substrate.

This sequence belongs to the FGAMS family. Monomer. Part of the FGAM synthase complex composed of 1 PurL, 1 PurQ and 2 PurS subunits.

It is found in the cytoplasm. The enzyme catalyses N(2)-formyl-N(1)-(5-phospho-beta-D-ribosyl)glycinamide + L-glutamine + ATP + H2O = 2-formamido-N(1)-(5-O-phospho-beta-D-ribosyl)acetamidine + L-glutamate + ADP + phosphate + H(+). It participates in purine metabolism; IMP biosynthesis via de novo pathway; 5-amino-1-(5-phospho-D-ribosyl)imidazole from N(2)-formyl-N(1)-(5-phospho-D-ribosyl)glycinamide: step 1/2. Part of the phosphoribosylformylglycinamidine synthase complex involved in the purines biosynthetic pathway. Catalyzes the ATP-dependent conversion of formylglycinamide ribonucleotide (FGAR) and glutamine to yield formylglycinamidine ribonucleotide (FGAM) and glutamate. The FGAM synthase complex is composed of three subunits. PurQ produces an ammonia molecule by converting glutamine to glutamate. PurL transfers the ammonia molecule to FGAR to form FGAM in an ATP-dependent manner. PurS interacts with PurQ and PurL and is thought to assist in the transfer of the ammonia molecule from PurQ to PurL. In Leptospira interrogans serogroup Icterohaemorrhagiae serovar copenhageni (strain Fiocruz L1-130), this protein is Phosphoribosylformylglycinamidine synthase subunit PurL.